Here is a 407-residue protein sequence, read N- to C-terminus: Odorant receptor 67a (407 aa).

The Cytoplasmic segment spans residues 1–40 (MDNVAEMPEEKYVEVDDFLRLAVKFYNTLGIDPYETGRKR). A helical membrane pass occupies residues 41–61 (TIWFQIYFALNMFNMVFSFYA). Over 62–79 (EVATLVDRLRDNENFLES) the chain is Extracellular. The helical transmembrane segment at 80-100 (CILLSYVSFVVMGLSKIGAVM) threads the bilayer. The Cytoplasmic portion of the chain corresponds to 101–144 (KKKPKMTALVRQLETCFPSPSAKVQEEYAVKSWLKRCHIYTKGF). Residues 145-165 (GGLFMIMYFAHALIPLFIYFI) form a helical membrane-spanning segment. The Extracellular portion of the chain corresponds to 166–208 (QRVLLHYPDAKQIMPFYQLEPWEFRDSWLFYPSYFHQSSAGYT). A helical membrane pass occupies residues 209 to 229 (ATCGSIAGDLMIFAVVLQVIM). The Cytoplasmic portion of the chain corresponds to 230–278 (HYERLAKVLREFKIQAHNAPNGAKEDIRKLQSLVANHIDILRLTDLMNE). Residues 279–300 (VFGIPLLLNFIASALLVCLVGV) traverse the membrane as a helical segment. Topologically, residues 301–314 (QLTIALSPEYFCKQ) are extracellular. The helical transmembrane segment at 315–331 (MLFLISVLLEVYLLCSF) threads the bilayer. Over 332 to 378 (SQRLIDASENVGHAAYDMDWLGSDKRFKKILIFISMRSQKPVCLKAT) the chain is Cytoplasmic. Residues 379–401 (VVLDLSMPTMSIFLGMSYKFFCA) form a helical membrane-spanning segment. The Extracellular portion of the chain corresponds to 402–407 (VRTMYQ).

The protein belongs to the insect chemoreceptor superfamily. Heteromeric odorant receptor channel (TC 1.A.69) family. Or49a subfamily. In terms of assembly, interacts with Orco. Complexes exist early in the endomembrane system in olfactory sensory neurons (OSNs), coupling these complexes to the conserved ciliary trafficking pathway. Expressed in olfactory sensory neurons in the antenna.

The protein resides in the cell membrane. Its function is as follows. Odorant receptor which mediates acceptance or avoidance behavior, depending on its substrates. The odorant receptor repertoire encodes a large collection of odor stimuli that vary widely in identity, intensity, and duration. Forms a complex with Orco to form odorant-sensing units, providing sensitive and prolonged odorant signaling and calcium permeability. Involved in the behavioral responses to benzaldehyde and acetophenone. The sequence is that of Odorant receptor 67a (Or67a) from Drosophila melanogaster (Fruit fly).